We begin with the raw amino-acid sequence, 807 residues long: Ribosome-releasing factor 2, mitochondrial (807 aa).

A mitochondrion-targeting transit peptide spans 1–18 (MFCRKYAFQTWKQFSRFY). Residues 27–315 (SKTRNIGIIA…GITKYLPSPL (289 aa)) form the tr-type G domain. Residues 36–43 (AHIDAGKT), 100–104 (DTPGH), and 154–157 (NKMD) each bind GTP.

The protein belongs to the TRAFAC class translation factor GTPase superfamily. Classic translation factor GTPase family. EF-G/EF-2 subfamily.

The protein localises to the mitochondrion. Its function is as follows. Mitochondrial GTPase that mediates the disassembly of ribosomes from messenger RNA at the termination of mitochondrial protein biosynthesis. Not involved in the GTP-dependent ribosomal translocation step during translation elongation. This is Ribosome-releasing factor 2, mitochondrial from Candida dubliniensis (strain CD36 / ATCC MYA-646 / CBS 7987 / NCPF 3949 / NRRL Y-17841) (Yeast).